Reading from the N-terminus, the 103-residue chain is Large ribosomal subunit protein bL21 (103 aa).

The protein belongs to the bacterial ribosomal protein bL21 family. In terms of assembly, part of the 50S ribosomal subunit. Contacts protein L20.

In terms of biological role, this protein binds to 23S rRNA in the presence of protein L20. In Shewanella denitrificans (strain OS217 / ATCC BAA-1090 / DSM 15013), this protein is Large ribosomal subunit protein bL21.